The sequence spans 629 residues: Polyadenylate-binding protein, cytoplasmic and nuclear (629 aa).

Residues 1-11 (MSAAETNQLQE) show a composition bias toward polar residues. The interval 1 to 48 (MSAAETNQLQESMEKLNIGSTTEEQSAAAATTTADQSAEEQGESSGVA) is disordered. Over residues 20-36 (STTEEQSAAAATTTADQ) the composition is skewed to low complexity. RRM domains follow at residues 52–130 (ASLY…WSQR), 140–217 (GNIF…KHIS), 233–310 (TNIY…RAQK), and 336–413 (VNLF…LAQR). Residues 503-534 (PPQFQQDFNGQNMRPQQQQQQQPRGGYYPNRN) are disordered. The segment covering 505-517 (QFQQDFNGQNMRP) has biased composition (polar residues). Positions 537–618 (SKRDLAAIIS…ALTAFEEYKK (82 aa)) constitute a PABC domain.

This sequence belongs to the polyadenylate-binding protein type-1 family.

The protein resides in the cytoplasm. Its subcellular location is the nucleus. Its function is as follows. Binds the poly(A) tail of mRNA. Appears to be an important mediator of the multiple roles of the poly(A) tail in mRNA biogenesis, stability and translation. In the nucleus, involved in both mRNA cleavage and polyadenylation. Is also required for efficient mRNA export to the cytoplasm. Acts in concert with a poly(A)-specific nuclease (PAN) to affect poly(A) tail shortening, which may occur concomitantly with either nucleocytoplasmic mRNA transport or translational initiation. In the cytoplasm, stimulates translation initiation and regulates mRNA decay through translation termination-coupled poly(A) shortening, probably mediated by PAN. This chain is Polyadenylate-binding protein, cytoplasmic and nuclear (PAB1), found in Candida albicans (strain SC5314 / ATCC MYA-2876) (Yeast).